Reading from the N-terminus, the 97-residue chain is Large ribosomal subunit protein eL21 (97 aa).

The protein belongs to the eukaryotic ribosomal protein eL21 family.

In Methanoculleus marisnigri (strain ATCC 35101 / DSM 1498 / JR1), this protein is Large ribosomal subunit protein eL21.